Here is a 255-residue protein sequence, read N- to C-terminus: ATP synthase subunit a (255 aa).

Positions 1–6 (MNFIIN) are cleaved as a propeptide — removed in mature form. 5 consecutive transmembrane segments (helical) span residues 32–52 (LTSF…FSIL), 91–111 (LFPF…VSLV), 121–141 (LIWT…TGLA), 159–200 (PLVP…LAGL), and 219–251 (LSIL…IKDA).

In terms of assembly, F-type ATP synthases have 2 components, the catalytic core F(1) and the membrane-embedded component F(0), linked together by a central stalk and a peripheral stalk. The central stalk, also called rotor shaft, is often seen as part of F(1). The peripheral stalk is seen as part of F(0). F(0) contains the membrane channel next to the rotor. F-type ATP synthases form dimers but each monomer functions independently in ATP generation. The dimer consists of 17 different polypeptides: ATP1 (subunit alpha, 3 molecules per monomer, part of F(1)), ATP2 (subunit beta, 3 copies per monomer, part of F(1)), ATP3 (subunit gamma, part of the central stalk), ATP4 (subunit b, part of the peripheral stalk), ATP5/OSCP (subunit 5/OSCP, part of the peripheral stalk), ATP6 (subunit a, part of the peripheral stalk), ATP7 (subunit d, part of the peripheral stalk), ATP8 (subunit 8, part of the peripheral stalk), OLI1 (subunit c, part of the rotor, 10 molecules per monomer), ATP14 (subunit h, part of the peripheral stalk), ATP15 (subunit epsilon, part of the central stalk), ATP16 (subunit delta, part of the central stalk), ATP17 (subunit f, part of the peripheral stalk), ATP18 (subunit i/j, part of the peripheral stalk), ATP19 (subunit k, dimer-specific, at interface between monomers), ATP20 (subunit g, at interface between monomers), TIM11 (subunit e, at interface between monomers).

It localises to the mitochondrion inner membrane. Its function is as follows. Mitochondrial membrane ATP synthase (F(1)F(0) ATP synthase or Complex V) produces ATP from ADP in the presence of a proton gradient across the membrane which is generated by electron transport complexes of the respiratory chain. F-type ATP synthases consist of two structural domains, F(1) - containing the extramembraneous catalytic core, and F(0) - containing the membrane proton channel, linked together by a central stalk and a peripheral stalk. During catalysis, ATP synthesis in the catalytic domain of F(1) is coupled via a rotary mechanism of the central stalk subunits to proton translocation. Key component of the proton channel; it may play a direct role in the translocation of protons across the membrane. The chain is ATP synthase subunit a from Yarrowia lipolytica (strain CLIB 122 / E 150) (Yeast).